The following is a 163-amino-acid chain: Transcription elongation factor GreB (163 aa).

Belongs to the GreA/GreB family. GreB subfamily.

Functionally, necessary for efficient RNA polymerase transcription elongation past template-encoded arresting sites. The arresting sites in DNA have the property of trapping a certain fraction of elongating RNA polymerases that pass through, resulting in locked ternary complexes. Cleavage of the nascent transcript by cleavage factors such as GreA or GreB allows the resumption of elongation from the new 3'terminus. GreB releases sequences of up to 9 nucleotides in length. The chain is Transcription elongation factor GreB from Vibrio parahaemolyticus serotype O3:K6 (strain RIMD 2210633).